Reading from the N-terminus, the 206-residue chain is Small ribosomal subunit protein uS4 (206 aa).

In terms of domain architecture, S4 RNA-binding spans 96-156 (TRLDNVVYRM…EKSRTQARIK (61 aa)).

This sequence belongs to the universal ribosomal protein uS4 family. As to quaternary structure, part of the 30S ribosomal subunit. Contacts protein S5. The interaction surface between S4 and S5 is involved in control of translational fidelity.

In terms of biological role, one of the primary rRNA binding proteins, it binds directly to 16S rRNA where it nucleates assembly of the body of the 30S subunit. With S5 and S12 plays an important role in translational accuracy. The chain is Small ribosomal subunit protein uS4 from Shewanella denitrificans (strain OS217 / ATCC BAA-1090 / DSM 15013).